Here is a 142-residue protein sequence, read N- to C-terminus: Clock-controlled protein 6 (142 aa).

It belongs to the SED1 family.

This chain is Clock-controlled protein 6 (ccg-6), found in Neurospora crassa (strain ATCC 24698 / 74-OR23-1A / CBS 708.71 / DSM 1257 / FGSC 987).